The sequence spans 519 residues: Demethylepipodophyllotoxin synthase (519 aa).

A helical membrane pass occupies residues 6-26; that stretch reads CLETLLLGFFVLLPCFFYFVW. Cys458 lines the heme pocket.

It belongs to the cytochrome P450 family. Heme serves as cofactor. As to expression, rhizome-specific expression.

It is found in the membrane. The enzyme catalyses (-)-4'-desmethyl-deoxypodophyllotoxin + reduced [NADPH--hemoprotein reductase] + O2 = 4'-demethylepipodophyllotoxin + oxidized [NADPH--hemoprotein reductase] + H2O + H(+). Its pathway is aromatic compound metabolism; phenylpropanoid biosynthesis. Cytochrome P450 involved in the biosynthesis of etoposide, a chemotherapeutic compound of the topoisomerase inhibitor family. Catalyzes the hydroxylation of deoxypodophyllotoxin to form epipodophyllotoxin. This is Demethylepipodophyllotoxin synthase from Sinopodophyllum hexandrum (Himalayan may apple).